The sequence spans 142 residues: Transcriptional regulator MraZ (142 aa).

SpoVT-AbrB domains are found at residues 5–51 (ASAL…PRPE) and 77–120 (AMDV…DSQT).

This sequence belongs to the MraZ family. In terms of assembly, forms oligomers.

It localises to the cytoplasm. Its subcellular location is the nucleoid. The sequence is that of Transcriptional regulator MraZ from Burkholderia cenocepacia (strain ATCC BAA-245 / DSM 16553 / LMG 16656 / NCTC 13227 / J2315 / CF5610) (Burkholderia cepacia (strain J2315)).